A 393-amino-acid polypeptide reads, in one-letter code: Elongation factor Tu (393 aa).

A tr-type G domain is found at 10-203 (KPHVNIGTIG…AVDSFIPDPV (194 aa)). The G1 stretch occupies residues 19–26 (GHVDHGKT). Position 19–26 (19–26 (GHVDHGKT)) interacts with GTP. Thr-26 is a binding site for Mg(2+). A G2 region spans residues 60-64 (GITIS). Positions 81–84 (DCPG) are G3. Residues 81-85 (DCPGH) and 136-139 (NKVD) each bind GTP. The segment at 136-139 (NKVD) is G4. A G5 region spans residues 173 to 175 (SAL).

It belongs to the TRAFAC class translation factor GTPase superfamily. Classic translation factor GTPase family. EF-Tu/EF-1A subfamily. As to quaternary structure, monomer.

The protein localises to the cytoplasm. It carries out the reaction GTP + H2O = GDP + phosphate + H(+). Functionally, GTP hydrolase that promotes the GTP-dependent binding of aminoacyl-tRNA to the A-site of ribosomes during protein biosynthesis. This Pelodictyon phaeoclathratiforme (strain DSM 5477 / BU-1) protein is Elongation factor Tu.